The sequence spans 348 residues: Casein kinase II subunit alpha (348 aa).

The region spanning 55 to 340 is the Protein kinase domain; sequence YEIVRKIGRG…PLEAMEHPFF (286 aa). ATP is bound by residues 61–69 and K84; that span reads IGRGKFSEV. D172 acts as the Proton acceptor in catalysis.

Belongs to the protein kinase superfamily. Ser/Thr protein kinase family. CK2 subfamily. Tetramer of two alpha and two beta chains.

It localises to the cytoplasm. It catalyses the reaction L-seryl-[protein] + ATP = O-phospho-L-seryl-[protein] + ADP + H(+). The catalysed reaction is L-threonyl-[protein] + ATP = O-phospho-L-threonyl-[protein] + ADP + H(+). Its function is as follows. Casein kinases are operationally defined by their preferential utilization of acidic proteins such as caseins as substrates. The alpha chain contains the catalytic site. The polypeptide is Casein kinase II subunit alpha (Theileria annulata).